The sequence spans 817 residues: B lymphocyte-induced maturation protein 1 homolog (817 aa).

Residues 1–62 (MGQGSGDDGV…PAGVSASGAR (62 aa)) form a disordered region. Over residues 15-61 (FSSAAAAAHSPPHSPLSVGVSSASSATSSSSTPPSSTSPAGVSASGA) the composition is skewed to low complexity. Residues 103–241 (MNLILKSSSK…ANTELSFWFS (139 aa)) form the SET domain. 4 consecutive C2H2-type zinc fingers follow at residues 508–530 (YACKDCNKTFGQLSNLKVHVRTH), 536–558 (FKCEICTKEFTQLAHLQKHHLVH), 564–586 (HRCDICDKRFSSTSNLKTHLRLH), and 592–614 (YTCDVCDAKFTQYVHLRLHKRLH). The C2H2-type 5; degenerate zinc-finger motif lies at 620–642 (YSCGTCGKKYISPSGLRTHWKTT). Residues 709–817 (LLGQGPSGMQ…LPSLGLPHYP (109 aa)) form a disordered region. Residues 779–794 (QGGPSSGSGQQQHPQH) show a composition bias toward low complexity.

As to quaternary structure, interacts with dre-1; the interaction targets blmp-1 for proteasomal degradation. Interacts with ldb-1 and ham-3. In terms of processing, ubiquitinated by the SCF(dre-1) complex, leading to its degradation by the proteasome. As to expression, expressed in hypodermal, vulval, intestinal and distal tip cells.

The protein resides in the nucleus. It is found in the cytoplasm. In terms of biological role, transcription factor which binds to enhancer elements in the promoter region of genes. Regulates the expression of the transcription factor bed-3 to control vulval development. Promotes terminal differentiation in the hypodermis and is involved in regulation of gonadal outgrowth and entry into the dauer stage. Regulates the timing of dorsalward migration of the distal tip cells of the hermaphrodite gonad by inhibiting precocious unc-5 and lin-29 expression which in turn prevents early dorsalward turning. Plays a role in male tail tip morphogenesis. The polypeptide is B lymphocyte-induced maturation protein 1 homolog (Caenorhabditis elegans).